Here is a 63-residue protein sequence, read N- to C-terminus: Large ribosomal subunit protein bL28 (63 aa).

This sequence belongs to the bacterial ribosomal protein bL28 family.

The protein is Large ribosomal subunit protein bL28 of Alkaliphilus oremlandii (strain OhILAs) (Clostridium oremlandii (strain OhILAs)).